The following is a 244-amino-acid chain: LexA repressor (244 aa).

A disordered region spans residues 1 to 24 (MSDSSDTTVDGASDGASDGASGAD). The span at 10 to 24 (DGASDGASDGASGAD) shows a compositional bias: low complexity. Positions 58–78 (IREIGDAVGLTSTSSVAHQLR) form a DNA-binding region, H-T-H motif. Catalysis depends on for autocatalytic cleavage activity residues serine 168 and lysine 205.

Belongs to the peptidase S24 family. Homodimer.

The catalysed reaction is Hydrolysis of Ala-|-Gly bond in repressor LexA.. Its function is as follows. Represses a number of genes involved in the response to DNA damage (SOS response), including recA and lexA. In the presence of single-stranded DNA, RecA interacts with LexA causing an autocatalytic cleavage which disrupts the DNA-binding part of LexA, leading to derepression of the SOS regulon and eventually DNA repair. The chain is LexA repressor from Mycobacterium marinum (strain ATCC BAA-535 / M).